The chain runs to 104 residues: Nucleoid-associated protein Dtur_0258 (104 aa).

Residues 84 to 104 are disordered; the sequence is EKSAEKMGSLTDGLPLPPGLF.

This sequence belongs to the YbaB/EbfC family. Homodimer.

The protein resides in the cytoplasm. It is found in the nucleoid. Its function is as follows. Binds to DNA and alters its conformation. May be involved in regulation of gene expression, nucleoid organization and DNA protection. The chain is Nucleoid-associated protein Dtur_0258 from Dictyoglomus turgidum (strain DSM 6724 / Z-1310).